The primary structure comprises 469 residues: UDP-N-acetylmuramate--L-alanine ligase (469 aa).

118 to 124 (GTHGKTT) contributes to the ATP binding site.

Belongs to the MurCDEF family.

The protein localises to the cytoplasm. The catalysed reaction is UDP-N-acetyl-alpha-D-muramate + L-alanine + ATP = UDP-N-acetyl-alpha-D-muramoyl-L-alanine + ADP + phosphate + H(+). Its pathway is cell wall biogenesis; peptidoglycan biosynthesis. Cell wall formation. This is UDP-N-acetylmuramate--L-alanine ligase from Ruegeria sp. (strain TM1040) (Silicibacter sp.).